Reading from the N-terminus, the 94-residue chain is MLKPLGDRVVIEVLEAEEKTASGIVLPDSAKEKPQSGKIVAVGSGRVLDNGTKEPLEVAEGDTVIFAKYSGTEVTYEGTDYLILRESDILAISK.

It belongs to the GroES chaperonin family. As to quaternary structure, heptamer of 7 subunits arranged in a ring. Interacts with the chaperonin GroEL.

The protein localises to the cytoplasm. Its function is as follows. Together with the chaperonin GroEL, plays an essential role in assisting protein folding. The GroEL-GroES system forms a nano-cage that allows encapsulation of the non-native substrate proteins and provides a physical environment optimized to promote and accelerate protein folding. GroES binds to the apical surface of the GroEL ring, thereby capping the opening of the GroEL channel. This chain is Co-chaperonin GroES, found in Listeria innocua serovar 6a (strain ATCC BAA-680 / CLIP 11262).